Reading from the N-terminus, the 1380-residue chain is Hepatocyte growth factor receptor (1380 aa).

Residues 1 to 24 form the signal peptide; that stretch reads MKAPAALAPGILVLLLTLVQKGGG. At 25–931 the chain is on the extracellular side; the sequence is ECREALAKSE…VIVQPDQNFT (907 aa). A Sema domain is found at 27 to 513; the sequence is REALAKSEMN…TGKKITKIPL (487 aa). Residue N45 is glycosylated (N-linked (GlcNAc...) asparagine). 4 disulfides stabilise this stretch: C95–C101, C98–C156, C129–C137, and C170–C173. An N-linked (GlcNAc...) asparagine glycan is attached at N200. Disulfide bonds link C296–C361 and C383–C395. 2 N-linked (GlcNAc...) asparagine glycosylation sites follow: N397 and N403. 4 disulfide bridges follow: C518-C536, C524-C559, C527-C543, and C539-C549. N-linked (GlcNAc...) asparagine glycosylation is present at N551. 3 consecutive IPT/TIG domains span residues 561–654, 656–738, and 741–835; these read PTIY…FSYV, PEIT…FSYQ, and PLVV…LIYV. T580 is a glycosylation site (O-linked (Man) threonine). 3 N-linked (GlcNAc...) asparagine glycosylation sites follow: N592, N605, and N633. 2 O-linked (Man) threonine glycosylation sites follow: T675 and T760. Residues N784, N878, and N929 are each glycosylated (N-linked (GlcNAc...) asparagine). The helical transmembrane segment at 932–954 threads the bilayer; it reads GLIVGVVSISVILLSSLGLFLWL. The Cytoplasmic segment spans residues 955–1380; sequence KKRKQIKDLG…HDTVDGEVDT (426 aa). S965 bears the Phosphoserine mark. T976 carries the post-translational modification Phosphothreonine. Phosphoserine occurs at positions 989, 996, and 999. Y1002 carries the phosphotyrosine modification. Positions 1077 to 1344 constitute a Protein kinase domain; sequence VHFNEVIGRG…RISAIFSTFI (268 aa). Residues 1083-1091 and K1109 each bind ATP; that span reads IGRGHFGCV. Residue D1203 is the Proton acceptor of the active site. The interaction with RANBP9 stretch occupies residues 1211-1380; it reads LDGKFTVKVA…HDTVDGEVDT (170 aa). Residue Y1229 is modified to Phosphotyrosine. A phosphotyrosine; by autocatalysis mark is found at Y1233 and Y1234. T1288 carries the post-translational modification Phosphothreonine. The segment at 1319–1358 is interaction with MUC20; it reads WHPKAEMRPSFTELVSRISAIFSTFIGEHYVHVNATYVNV. Residues Y1348 and Y1355 each carry the phosphotyrosine; by autocatalysis modification. Y1364 carries the phosphotyrosine modification.

The protein belongs to the protein kinase superfamily. Tyr protein kinase family. In terms of assembly, heterodimer made of an alpha chain (50 kDa) and a beta chain (145 kDa) which are disulfide linked. Binds PLXNB1. Interacts when phosphorylated with downstream effectors including STAT3, PIK3R1, SRC, PCLG1, GRB2 and GAB1. Interacts with SPSB1, SPSB2 and SPSB4. Interacts with INPP5D/SHIP1. When phosphorylated at Tyr-1355, interacts with INPPL1/SHIP2. Interacts with RANBP9 and RANBP10, as well as SPSB1, SPSB2, SPSB3 and SPSB4. SPSB1 binding occurs in the presence and in the absence of HGF, however HGF treatment has a positive effect on this interaction. Interacts with MUC20; prevents interaction with GRB2 and suppresses hepatocyte growth factor-induced cell proliferation. Interacts with GRB10. Interacts with PTPN1 and PTPN2. Interacts with HSP90AA1 and HSP90AB1; the interaction suppresses MET kinase activity. Interacts with tensin TNS3. Interacts (when phosphorylated) with tensin TNS4 (via SH2 domain); the interaction increases MET protein stability by inhibiting MET endocytosis and subsequent lysosomal degradation. Post-translationally, autophosphorylated in response to ligand binding on Tyr-1233 and Tyr-1234 in the kinase domain leading to further phosphorylation of Tyr-1348 and Tyr-1355 in the C-terminal multifunctional docking site. Dephosphorylated by PTPRJ at Tyr-1348 and Tyr-1364. Dephosphorylated by PTPN1 and PTPN2. In terms of processing, ubiquitinated. Ubiquitination by CBL regulates the receptor stability and activity through proteasomal degradation. O-mannosylation of IPT/TIG domains by TMEM260 is required for protein maturation. O-mannosylated residues are composed of single mannose glycans that are not elongated or modified.

The protein localises to the membrane. The catalysed reaction is L-tyrosyl-[protein] + ATP = O-phospho-L-tyrosyl-[protein] + ADP + H(+). With respect to regulation, in its inactive state, the C-terminal tail interacts with the catalytic domain and inhibits the kinase activity. Upon ligand binding, the C-terminal tail is displaced and becomes phosphorylated, thus increasing the kinase activity. Receptor tyrosine kinase that transduces signals from the extracellular matrix into the cytoplasm by binding to hepatocyte growth factor/HGF ligand. Regulates many physiological processes including proliferation, scattering, morphogenesis and survival. Ligand binding at the cell surface induces autophosphorylation of MET on its intracellular domain that provides docking sites for downstream signaling molecules. Following activation by ligand, interacts with the PI3-kinase subunit PIK3R1, PLCG1, SRC, GRB2, STAT3 or the adapter GAB1. Recruitment of these downstream effectors by MET leads to the activation of several signaling cascades including the RAS-ERK, PI3 kinase-AKT, or PLCgamma-PKC. The RAS-ERK activation is associated with the morphogenetic effects while PI3K/AKT coordinates prosurvival effects. During embryonic development, MET signaling plays a role in gastrulation, development and migration of muscles and neuronal precursors, angiogenesis and kidney formation. In adults, participates in wound healing as well as organ regeneration and tissue remodeling. Also promotes differentiation and proliferation of hematopoietic cells. This is Hepatocyte growth factor receptor (MET) from Echinops telfairi (Lesser hedgehog tenrec).